The chain runs to 443 residues: Ribosomal protein uS12 methylthiotransferase RimO (443 aa).

The 111-residue stretch at 5 to 115 (PNIGFISLGC…VMKHVHKYVP (111 aa)) folds into the MTTase N-terminal domain. The [4Fe-4S] cluster site is built by Cys-14, Cys-50, Cys-79, Cys-147, Cys-151, and Cys-154. The Radical SAM core domain occupies 133-374 (LTPKHYAYLK…MQVQQRISAA (242 aa)). The region spanning 377-443 (QQKVGKTLAV…ADEYDLWGTC (67 aa)) is the TRAM domain.

The protein belongs to the methylthiotransferase family. RimO subfamily. [4Fe-4S] cluster is required as a cofactor.

Its subcellular location is the cytoplasm. It carries out the reaction L-aspartate(89)-[ribosomal protein uS12]-hydrogen + (sulfur carrier)-SH + AH2 + 2 S-adenosyl-L-methionine = 3-methylsulfanyl-L-aspartate(89)-[ribosomal protein uS12]-hydrogen + (sulfur carrier)-H + 5'-deoxyadenosine + L-methionine + A + S-adenosyl-L-homocysteine + 2 H(+). Its function is as follows. Catalyzes the methylthiolation of an aspartic acid residue of ribosomal protein uS12. This Actinobacillus pleuropneumoniae serotype 5b (strain L20) protein is Ribosomal protein uS12 methylthiotransferase RimO.